Reading from the N-terminus, the 347-residue chain is uncharacterized protein (347 aa).

Positions Met-1–Ala-26 are cleaved as a signal peptide. The span at Gly-41–His-60 shows a compositional bias: polar residues. Disordered regions lie at residues Gly-41–Trp-110 and Ser-148–Lys-189. Positions Ser-148–Pro-157 are enriched in low complexity.

Binds to numerous extracellular matrix proteins.

It localises to the secreted. It is found in the extracellular space. The protein resides in the extracellular matrix. This is an uncharacterized protein from Pan troglodytes (Chimpanzee).